The sequence spans 504 residues: Anaerobic nitric oxide reductase transcription regulator NorR (504 aa).

The residue at position 57 (Asp-57) is a 4-aspartylphosphate. The Sigma-54 factor interaction domain occupies 187–416 (MIGLSPGMTQ…LEHAIHRAVV (230 aa)). Residues 215 to 222 (GETGTGKE) and 278 to 287 (ADNGTLFLDE) each bind ATP. The H-T-H motif DNA-binding region spans 479–498 (WAACARMLETDVANLHRLAK).

It participates in nitrogen metabolism; nitric oxide reduction. Required for the expression of anaerobic nitric oxide (NO) reductase, acts as a transcriptional activator for at least the norVW operon. Activation also requires sigma-54. In Escherichia coli O6:H1 (strain CFT073 / ATCC 700928 / UPEC), this protein is Anaerobic nitric oxide reductase transcription regulator NorR.